The chain runs to 1780 residues: Chitin synthase Vb (1780 aa).

N-linked (GlcNAc...) asparagine glycans are attached at residues N133, N153, N629, N644, N655, and N660. A run of 2 helical transmembrane segments spans residues 740–760 (AWIAFVWALTFWIPSPLLKFI) and 776–796 (FVLFFLIILINGMVVFWIIGF). A Cytochrome b5 heme-binding domain is found at 805–866 (NKAWNVKEVA…LSGMVMDNYF (62 aa)). N-linked (GlcNAc...) asparagine glycans are attached at residues N888 and N1009. Residues 1046–1066 (LLLAFAIIICIVTAVKFLAAL) form a helical membrane-spanning segment. Residue N1411 is glycosylated (N-linked (GlcNAc...) asparagine). The next 3 membrane-spanning stretches (helical) occupy residues 1442-1462 (LCGTIILPSTCVYIGYLIYIL), 1469-1489 (IPYISLAMIGAVYGLQALIFI), and 1497-1517 (IGWMIIYILAFPIYSFILPLY). The N-linked (GlcNAc...) asparagine glycan is linked to N1524. Positions 1649–1691 (TGVHDMRSQSPYQDYPGQHPSVSNLRGQANLSPATGGGHSRSG) are disordered. Residues 1668-1681 (PSVSNLRGQANLSP) are compositionally biased toward polar residues. Residues 1722–1778 (GPNDMAIVESIRSVLCEVDLDTVTKKQVRALVEQRLQTELVGERRTFMDRQIDHELE) enclose the DEK-C domain.

The protein belongs to the chitin synthase family. Class VII subfamily.

Its subcellular location is the cell membrane. The catalysed reaction is [(1-&gt;4)-N-acetyl-beta-D-glucosaminyl](n) + UDP-N-acetyl-alpha-D-glucosamine = [(1-&gt;4)-N-acetyl-beta-D-glucosaminyl](n+1) + UDP + H(+). In terms of biological role, polymerizes chitin, a structural polymer of the cell wall and septum, by transferring the sugar moiety of UDP-GlcNAc to the non-reducing end of the growing chitin polymer. ChsV and chsVb do perform additive, but not redundant, functions in septum formation. Functions not only in the maintenance of cell wall integrity under different osmotic conditions but also in polarized cell wall synthesis. Plays an important role in the complex infection process of this fungus. The polypeptide is Chitin synthase Vb (Fusarium oxysporum f. sp. lycopersici (strain 4287 / CBS 123668 / FGSC 9935 / NRRL 34936) (Fusarium vascular wilt of tomato)).